Here is a 164-residue protein sequence, read N- to C-terminus: Cyclic pyranopterin monophosphate synthase (164 aa).

Residues 75–77 and 116–117 each bind substrate; these read MCH and ME. Residue D131 is part of the active site.

Belongs to the MoaC family. In terms of assembly, homohexamer; trimer of dimers.

The enzyme catalyses (8S)-3',8-cyclo-7,8-dihydroguanosine 5'-triphosphate = cyclic pyranopterin phosphate + diphosphate. It functions in the pathway cofactor biosynthesis; molybdopterin biosynthesis. Catalyzes the conversion of (8S)-3',8-cyclo-7,8-dihydroguanosine 5'-triphosphate to cyclic pyranopterin monophosphate (cPMP). This Staphylococcus aureus (strain MRSA252) protein is Cyclic pyranopterin monophosphate synthase.